The following is a 428-amino-acid chain: Glutamate-1-semialdehyde 2,1-aminomutase (428 aa).

Residue Lys267 is modified to N6-(pyridoxal phosphate)lysine.

It belongs to the class-III pyridoxal-phosphate-dependent aminotransferase family. HemL subfamily. In terms of assembly, homodimer. Pyridoxal 5'-phosphate is required as a cofactor.

It localises to the cytoplasm. It catalyses the reaction (S)-4-amino-5-oxopentanoate = 5-aminolevulinate. It participates in porphyrin-containing compound metabolism; protoporphyrin-IX biosynthesis; 5-aminolevulinate from L-glutamyl-tRNA(Glu): step 2/2. The chain is Glutamate-1-semialdehyde 2,1-aminomutase from Flavobacterium psychrophilum (strain ATCC 49511 / DSM 21280 / CIP 103535 / JIP02/86).